Consider the following 295-residue polypeptide: Probable endonuclease 4 (295 aa).

Zn(2+) contacts are provided by His-78, His-118, Glu-154, Asp-188, His-191, His-225, Asp-238, His-240, and Glu-270.

It belongs to the AP endonuclease 2 family. The cofactor is Zn(2+).

The enzyme catalyses Endonucleolytic cleavage to 5'-phosphooligonucleotide end-products.. Functionally, endonuclease IV plays a role in DNA repair. It cleaves phosphodiester bonds at apurinic or apyrimidinic (AP) sites, generating a 3'-hydroxyl group and a 5'-terminal sugar phosphate. In Vibrio parahaemolyticus serotype O3:K6 (strain RIMD 2210633), this protein is Probable endonuclease 4.